A 108-amino-acid polypeptide reads, in one-letter code: Tubulin-specific chaperone A (108 aa).

Alanine 2 carries the post-translational modification N-acetylalanine.

Belongs to the TBCA family. In terms of assembly, supercomplex made of cofactors A to E. Cofactors A and D function by capturing and stabilizing tubulin in a quasi-native conformation. Cofactor E binds to the cofactor D-tubulin complex; interaction with cofactor C then causes the release of tubulin polypeptides that are committed to the native state. In terms of tissue distribution, widely expressed, but is most abundant in the testis.

The protein resides in the cytoplasm. It is found in the cytoskeleton. Its function is as follows. Tubulin-folding protein; involved in the early step of the tubulin folding pathway. The protein is Tubulin-specific chaperone A (TBCA) of Bos taurus (Bovine).